The following is a 284-amino-acid chain: Bifunctional protein FolD (284 aa).

Residues 165–167 and serine 190 contribute to the NADP(+) site; that span reads GRS.

Belongs to the tetrahydrofolate dehydrogenase/cyclohydrolase family. As to quaternary structure, homodimer.

It catalyses the reaction (6R)-5,10-methylene-5,6,7,8-tetrahydrofolate + NADP(+) = (6R)-5,10-methenyltetrahydrofolate + NADPH. The enzyme catalyses (6R)-5,10-methenyltetrahydrofolate + H2O = (6R)-10-formyltetrahydrofolate + H(+). Its pathway is one-carbon metabolism; tetrahydrofolate interconversion. Its function is as follows. Catalyzes the oxidation of 5,10-methylenetetrahydrofolate to 5,10-methenyltetrahydrofolate and then the hydrolysis of 5,10-methenyltetrahydrofolate to 10-formyltetrahydrofolate. This is Bifunctional protein FolD from Streptococcus uberis (strain ATCC BAA-854 / 0140J).